The primary structure comprises 76 residues: U-scoloptoxin(13)-Sa1a (76 aa).

Residues 1 to 22 form the signal peptide; the sequence is MAYIFALIFAFVVCINTDVIQA.

This sequence belongs to the scoloptoxin-13 family. In terms of processing, contains 4 disulfide bonds. In terms of tissue distribution, expressed by the venom gland.

It localises to the secreted. This Scolopendra alternans (Florida Keys giant centipede) protein is U-scoloptoxin(13)-Sa1a.